A 974-amino-acid chain; its full sequence is Toxin subunit YenC1 (974 aa).

9 RHS repeats span residues 165 to 179, 290 to 304, 322 to 336, 354 to 368, 398 to 412, 490 to 504, 570 to 584, 596 to 610, and 630 to 644; these read AGQC…GLNQ, GVLT…TQRL, FQDL…GNVL, VPEN…YQLV, NYIR…GNLM, SDSE…SQRV, NDEL…IGSS, SQEE…AVWM, and DATG…YYQP. The interval 600-680 is RHS-repeat associated core domain; it reads YYPYGGTAVW…PIVLHDPDGL (81 aa). The cytotoxic necrotising factor domain stretch occupies residues 699–940; that stretch reads ISSLKGTGPF…GEVSASTLLE (242 aa).

It belongs to the RHS family. Semipurified toxin complex consists of at least YenA1-YenA2-YenB-YenC1-YenC2-Chi1-Chi2. The Yen-TC:K9 subcomplex is about 26 nm tall and 22 nm in diameter with 5-fold symmetry and 5 copies of YenA1, YenA2, Chi1 and Chi2; the chitinase subunits may be solvent accessible on the exterior the complex. The Yen-TC:K9 subcomplex has no insecticidal activity. The native complex with additional YenB, YenC1 and YenC2 subunits is 16 nm taller and is insecticidal; the toxicity-conferring subunits are present at about 1 copy each.

The protein localises to the secreted. Its activity is regulated as follows. Toxin complex is secreted when grown at 25 degrees Celsius or less; at higher temperatures the proteins are present intracellularly but not secreted. Part of an orally active toxin complex (TC) with strong insecticidal effects on larvae of the Coleoptera Costelytra zealandica, Acrossidius tasmania and Adoryphorus couloni and some Lepidoptera larvae. The TC has an endochitinase activity. In Yersinia entomophaga, this protein is Toxin subunit YenC1.